The following is a 360-amino-acid chain: Phosphoserine aminotransferase (360 aa).

Position 41 (R41) interacts with L-glutamate. Residues W101, T152, D172, and Q195 each contribute to the pyridoxal 5'-phosphate site. The residue at position 196 (K196) is an N6-(pyridoxal phosphate)lysine. 237–238 (NT) is a pyridoxal 5'-phosphate binding site.

This sequence belongs to the class-V pyridoxal-phosphate-dependent aminotransferase family. SerC subfamily. Homodimer. Pyridoxal 5'-phosphate is required as a cofactor.

Its subcellular location is the cytoplasm. The enzyme catalyses O-phospho-L-serine + 2-oxoglutarate = 3-phosphooxypyruvate + L-glutamate. It catalyses the reaction 4-(phosphooxy)-L-threonine + 2-oxoglutarate = (R)-3-hydroxy-2-oxo-4-phosphooxybutanoate + L-glutamate. Its pathway is amino-acid biosynthesis; L-serine biosynthesis; L-serine from 3-phospho-D-glycerate: step 2/3. It functions in the pathway cofactor biosynthesis; pyridoxine 5'-phosphate biosynthesis; pyridoxine 5'-phosphate from D-erythrose 4-phosphate: step 3/5. Catalyzes the reversible conversion of 3-phosphohydroxypyruvate to phosphoserine and of 3-hydroxy-2-oxo-4-phosphonooxybutanoate to phosphohydroxythreonine. This chain is Phosphoserine aminotransferase, found in Burkholderia multivorans (strain ATCC 17616 / 249).